The chain runs to 345 residues: Anthranilate phosphoribosyltransferase (345 aa).

5-phospho-alpha-D-ribose 1-diphosphate-binding positions include G84, 87 to 88 (GD), T92, 94 to 97 (NIST), 112 to 120 (KHGNRSVSS), and S124. G84 is an anthranilate binding site. S96 is a binding site for Mg(2+). N115 is a binding site for anthranilate. An anthranilate-binding site is contributed by R170. Mg(2+) contacts are provided by D229 and E230.

This sequence belongs to the anthranilate phosphoribosyltransferase family. As to quaternary structure, homodimer. Mg(2+) serves as cofactor.

It catalyses the reaction N-(5-phospho-beta-D-ribosyl)anthranilate + diphosphate = 5-phospho-alpha-D-ribose 1-diphosphate + anthranilate. It functions in the pathway amino-acid biosynthesis; L-tryptophan biosynthesis; L-tryptophan from chorismate: step 2/5. In terms of biological role, catalyzes the transfer of the phosphoribosyl group of 5-phosphorylribose-1-pyrophosphate (PRPP) to anthranilate to yield N-(5'-phosphoribosyl)-anthranilate (PRA). The sequence is that of Anthranilate phosphoribosyltransferase from Xanthomonas campestris pv. campestris (strain 8004).